The sequence spans 344 residues: uncharacterized protein (344 aa).

The first 27 residues, 1 to 27 (MKKWLIIAVSLAIAIVLFMYTKGEAKA), serve as a signal peptide directing secretion. Positions 29-344 (GMTVGYTTGD…FWKAIRKGTK (316 aa)) constitute a GH18 domain. The active-site Proton donor is the glutamate 140.

It belongs to the glycosyl hydrolase 18 family.

This is an uncharacterized protein from Bacillus subtilis (strain 168).